The chain runs to 428 residues: Ribosome biogenesis protein WDR12 homolog (428 aa).

Residues 13–97 (LQVHFTTKQK…EDTIELEYVE (85 aa)) form a ubiquitin-like (UBL) domain region. WD repeat units follow at residues 109 to 146 (LHDDWVSAVQAKDGWILTGTYDNTVNLWNTKGKHKLTI), 148 to 190 (GHVA…NTAE), 197 to 236 (GHERGVGCIAVNPAKTQMASGSMDTMLKIWSTELQADKGE), 259 to 297 (GHREFVSGVQWIDNTTIATCSWDHTIKLWDLSMGGIKTE), 299 to 338 (TGNKSFFDLSYSPLNGMIITASPDKNLRLYDPRSKHGNFV), 344 to 384 (GHSQ…APIF), and 388 to 426 (GHEDKVLACDWSNPKYILSGGSDNAVRVFKSRIAVDNTK).

Belongs to the WD repeat WDR12/YTM1 family.

It localises to the nucleus. The protein resides in the nucleolus. It is found in the nucleoplasm. Required for maturation of ribosomal RNAs and formation of the large ribosomal subunit. This is Ribosome biogenesis protein WDR12 homolog from Anopheles gambiae (African malaria mosquito).